The sequence spans 239 residues: MLKRVFLSLLVLIGLLLLTVLGLDRWMSWKTAPYIYDELQDLPYRQVGVVLGTAKYYRTGVINQYYRYRIQGAINAYNSGKVNYLLLSGDNALQSYNEPMTMRKDLIAAGVDPSDIVLDYAGFRTLDSIVRTRKVFDTNDFIIITQRFHCERALFIALHMGIQAQCYAVPSPKDMLSVRIREFAARFGALADLYIFKREPRFLGPLVPIPAMHQVPEDAQGYPAVTPEQLLELQKKQGK.

The Cytoplasmic portion of the chain corresponds to 1-6; sequence MLKRVF. Residues 7–23 form a helical membrane-spanning segment; the sequence is LSLLVLIGLLLLTVLGL. The Periplasmic segment spans residues 24–239; the sequence is DRWMSWKTAP…LLELQKKQGK (216 aa).

The protein localises to the cell inner membrane. Functionally, participates in the barrier function of the cell envelope. The polypeptide is Protein SanA (sanA) (Escherichia coli O157:H7).